We begin with the raw amino-acid sequence, 99 residues long: Transcription factor 1 (99 aa).

May be involved in preference for HM-URA DNA regions lie at residues 52-77 (PVARQARKGFNPQTQEALEIAPSVGV) and 90-99 (EGLKYEDFAK). DNA-binding regions lie at residues phenylalanine 61 and 93-94 (KY).

It belongs to the bacterial histone-like protein family. As to quaternary structure, homodimer.

Functionally, selectively binds to and inhibits the transcription of hydroxymethyluracil-(hmUra)-containing DNA, such as SP01 DNA, by RNA polymerase in vitro. This is Transcription factor 1 (TF1) from Bacillus phage SP01 (Bacteriophage SP01).